The primary structure comprises 285 residues: 1,4-dihydroxy-2-naphthoyl-CoA synthase (285 aa).

Substrate contacts are provided by residues R45, 84 to 89 (SGGDQK), Y97, 129 to 133 (YSIGG), T155, S161, Y258, and K273. Residue 154 to 156 (QTG) participates in hydrogencarbonate binding.

Belongs to the enoyl-CoA hydratase/isomerase family. MenB subfamily. In terms of assembly, homohexamer. Dimer of a homotrimer. It depends on hydrogencarbonate as a cofactor.

The catalysed reaction is 2-succinylbenzoyl-CoA + H(+) = 1,4-dihydroxy-2-naphthoyl-CoA + H2O. It participates in quinol/quinone metabolism; 1,4-dihydroxy-2-naphthoate biosynthesis; 1,4-dihydroxy-2-naphthoate from chorismate: step 6/7. Its pathway is quinol/quinone metabolism; menaquinone biosynthesis. Inhibited by sulfite and nitrate. Its function is as follows. Converts o-succinylbenzoyl-CoA (OSB-CoA) to 1,4-dihydroxy-2-naphthoyl-CoA (DHNA-CoA). This chain is 1,4-dihydroxy-2-naphthoyl-CoA synthase, found in Escherichia coli (strain K12).